The sequence spans 194 residues: 7-methyl-GTP pyrophosphatase (194 aa).

The active-site Proton acceptor is Asp71.

The protein belongs to the Maf family. YceF subfamily. It depends on a divalent metal cation as a cofactor.

Its subcellular location is the cytoplasm. It carries out the reaction N(7)-methyl-GTP + H2O = N(7)-methyl-GMP + diphosphate + H(+). In terms of biological role, nucleoside triphosphate pyrophosphatase that hydrolyzes 7-methyl-GTP (m(7)GTP). May have a dual role in cell division arrest and in preventing the incorporation of modified nucleotides into cellular nucleic acids. The sequence is that of 7-methyl-GTP pyrophosphatase from Aromatoleum aromaticum (strain DSM 19018 / LMG 30748 / EbN1) (Azoarcus sp. (strain EbN1)).